Consider the following 494-residue polypeptide: Potassium voltage-gated channel subfamily A member 2 (494 aa).

The segment at 1–25 (MTVATGDPSDEAAAHPGNPAEYDPD) is disordered. The segment at 1 to 124 (MTVATGDPSD…YELGDEAIEL (124 aa)) is tetramerization domain. Residues 1–159 (MTVATGDPSD…LLFEYPESSG (159 aa)) lie on the Cytoplasmic side of the membrane. The chain crosses the membrane as a helical span at residues 160–181 (PARIIAIISVMVILISIVSFCL). The Extracellular portion of the chain corresponds to 182–216 (ETLPIFRNDDDEPHSVFDTNTNTTIYFTSTYFTDP). The N-linked (GlcNAc...) asparagine glycan is linked to N203. A helical membrane pass occupies residues 217 to 238 (FFILETLCIIWFSFEFLVRLFA). C239 is lipidated: S-palmitoyl cysteine. Topologically, residues 239–249 (CPSKSGFFGNV) are cytoplasmic. A helical membrane pass occupies residues 250–270 (MNIIDVVAIIPYFITLATELA). Residues 271–284 (EKPEDGQAGQQAMS) lie on the Extracellular side of the membrane. Residues 285 to 305 (LAILRVIRLVRVFRIFKLSRH) traverse the membrane as a helical; Voltage-sensor segment. Residues 306–320 (SKGLQILGQTLKASM) lie on the Cytoplasmic side of the membrane. The tract at residues 307–320 (KGLQILGQTLKASM) is S4-S5 linker. The chain crosses the membrane as a helical span at residues 321–342 (RELGLLIFFLFIGVILFSSAVY). The Extracellular portion of the chain corresponds to 343-356 (FAEADEPESQFESI). The segment at residues 357–368 (PDAFWWAVVSMT) is an intramembrane region (helical). The Selectivity filter motif lies at 369–374 (TVGYGD). The stretch at 369-376 (TVGYGDMV) is an intramembrane region. The Extracellular portion of the chain corresponds to 377–383 (PTTIGGK). A helical membrane pass occupies residues 384-412 (IVGSLCAIAGVLTIALPVPVIVSNFNYFY). Over 413–494 (HRETEGEEQA…VNITKMLTDV (82 aa)) the chain is Cytoplasmic. Positions 492-494 (TDV) match the PDZ-binding motif.

This sequence belongs to the potassium channel family. A (Shaker) (TC 1.A.1.2) subfamily. Kv1.2/KCNA2 sub-subfamily. In terms of assembly, homotetramer and heterotetramer with other family members. In terms of tissue distribution, expressed in oligodendrocytes.

It is found in the cell membrane. The catalysed reaction is K(+)(in) = K(+)(out). In terms of biological role, voltage-gated potassium channel that mediates transmembrane potassium transport in excitable membranes, primarily in the brain and central nervous system. Prevents aberrant action potential firing and regulates neuronal output. Forms tetrameric potassium-selective channels through which potassium ions pass in accordance with their electrochemical gradient. The channel alternates between opened and closed conformations in response to the voltage difference across the membrane. Can form functional homotetrameric channels and heterotetrameric channels with other family members; the channels characteristics depend critically on the types of channel-forming alpha subunits that are present. Channel properties are modulated by cytoplasmic beta subunits that regulate the subcellular location of the alpha subunits. In vivo, membranes probably contain a mixture of heteromeric potassium channel complexes, making it difficult to assign currents observed in intact tissues to any particular potassium channel family member. Homotetrameric KCNA2 forms a delayed-rectifier potassium channel that opens in response to membrane depolarization, followed by slow spontaneous channel closure. Regulates neuronal excitability and plays a role as pacemaker in the regulation of neuronal action potentials. KCNA2-containing channels play a presynaptic role and prevent hyperexcitability and aberrant action potential firing. Response to toxins that are selective for KCNA2-containing potassium channels suggests that in Purkinje cells, dendritic subthreshold KCNA2-containing potassium channels prevent random spontaneous calcium spikes, suppressing dendritic hyperexcitability without hindering the generation of somatic action potentials, and thereby play an important role in motor coordination. Plays a role in the induction of long-term potentiation of neuron excitability in the CA3 layer of the hippocampus. This chain is Potassium voltage-gated channel subfamily A member 2 (kcna2), found in Oncorhynchus mykiss (Rainbow trout).